We begin with the raw amino-acid sequence, 186 residues long: MEAFSSKDMAMQAQKKILSRMASKSVAQMFIDDNSSEVLDELYRVSKEHSGNRAEAQKVVKNMIKIAVKVGVLFRHEKFSAEELSIAQEFRKKLHHGAMTAISFQEVEFTFDKSVMINLLSDCRDLLLKLVEKHLTPKSLDRIRHVFNHYSNPELLTHLYDPQGNLWSNLSKICSGLNRMIEEGKL.

The protein belongs to the TNFAIP8 family. TNFAIP8L2 subfamily.

In terms of biological role, acts as a negative regulator of innate and adaptive immunity by maintaining immune homeostasis. Negative regulator of Toll-like receptor and T-cell receptor function. Prevents hyperresponsiveness of the immune system and maintains immune homeostasis. Inhibits jun/ap1 and NF-kappa-B activation. Promotes Fas-induced apoptosis. The sequence is that of Tumor necrosis factor, alpha-induced protein 8-like protein 2 A (tnfaip8l2a) from Danio rerio (Zebrafish).